The chain runs to 447 residues: GTPase Der (447 aa).

EngA-type G domains are found at residues lysine 4–glutamate 165 and leucine 180–asparagine 357. GTP is bound by residues glycine 10 to serine 17, aspartate 57 to leucine 61, asparagine 119 to glutamate 122, glycine 186 to serine 193, aspartate 233 to leucine 237, and asparagine 298 to aspartate 301. The KH-like domain maps to lysine 358–lysine 443.

It belongs to the TRAFAC class TrmE-Era-EngA-EngB-Septin-like GTPase superfamily. EngA (Der) GTPase family. As to quaternary structure, associates with the 50S ribosomal subunit.

In terms of biological role, GTPase that plays an essential role in the late steps of ribosome biogenesis. This is GTPase Der from Rickettsia prowazekii (strain Madrid E).